Here is a 185-residue protein sequence, read N- to C-terminus: Lipid A acyltransferase PagP (185 aa).

The N-terminal stretch at 1–14 (MKLKPVLYLLMLLG) is a signal peptide. A lipid anchor (N-palmitoyl cysteine) is attached at Cys15. Cys15 carries the S-diacylglycerol cysteine lipid modification. Residues His57, Asp100, and Ser101 contribute to the active site.

Belongs to the lipid A palmitoyltransferase family. Homodimer.

It localises to the cell outer membrane. The enzyme catalyses a lipid A + a 1,2-diacyl-sn-glycero-3-phosphocholine = a hepta-acyl lipid A + a 2-acyl-sn-glycero-3-phosphocholine. It catalyses the reaction a lipid IVA + a 1,2-diacyl-sn-glycero-3-phosphocholine = a lipid IVB + a 2-acyl-sn-glycero-3-phosphocholine. The catalysed reaction is a lipid IIA + a 1,2-diacyl-sn-glycero-3-phosphocholine = a lipid IIB + a 2-acyl-sn-glycero-3-phosphocholine. Functionally, transfers a fatty acid residue from the sn-1 position of a phospholipid to the N-linked hydroxyfatty acid chain on the proximal unit of lipid A or its precursors. This chain is Lipid A acyltransferase PagP, found in Erwinia sp. (strain Ejp617).